Reading from the N-terminus, the 138-residue chain is FUN14 domain-containing protein fndc-1 (138 aa).

The next 2 membrane-spanning stretches (helical) occupy residues proline 37–threonine 56 and leucine 61–histidine 78. Residues asparagine 85 and asparagine 111 are each glycosylated (N-linked (GlcNAc...) asparagine).

The protein belongs to the FUN14 family. In terms of tissue distribution, broadly expressed in somatic tissues. Expressed in the hermaphrodite spermatheca and male gonad. Expressed in spermatids, but not expressed in oocytes.

It is found in the mitochondrion outer membrane. In terms of biological role, mitophagy receptor which plays a role in paternal mitochondria degradation in embryos after the two-cell stage. This is FUN14 domain-containing protein fndc-1 from Caenorhabditis elegans.